The sequence spans 150 residues: Large ribosomal subunit protein uL13 (150 aa).

Residues 130-150 (EHPHGAQQPQPYQLNPSASIK) are disordered. Positions 136–150 (QQPQPYQLNPSASIK) are enriched in polar residues.

It belongs to the universal ribosomal protein uL13 family. In terms of assembly, part of the 50S ribosomal subunit.

Its function is as follows. This protein is one of the early assembly proteins of the 50S ribosomal subunit, although it is not seen to bind rRNA by itself. It is important during the early stages of 50S assembly. This is Large ribosomal subunit protein uL13 from Synechococcus sp. (strain RCC307).